The primary structure comprises 248 residues: Probable pyridoxal 5'-phosphate synthase subunit pdx2 (248 aa).

70 to 72 (GES) is an L-glutamine binding site. Residue Cys-106 is the Nucleophile of the active site. Residues Arg-136 and 174 to 175 (IR) contribute to the L-glutamine site. Catalysis depends on charge relay system residues His-221 and Glu-223.

Belongs to the glutaminase PdxT/SNO family.

It carries out the reaction aldehydo-D-ribose 5-phosphate + D-glyceraldehyde 3-phosphate + L-glutamine = pyridoxal 5'-phosphate + L-glutamate + phosphate + 3 H2O + H(+). It catalyses the reaction L-glutamine + H2O = L-glutamate + NH4(+). Its pathway is cofactor biosynthesis; pyridoxal 5'-phosphate biosynthesis. Functionally, catalyzes the hydrolysis of glutamine to glutamate and ammonia as part of the biosynthesis of pyridoxal 5'-phosphate. The resulting ammonia molecule is channeled to the active site of pdx1. The sequence is that of Probable pyridoxal 5'-phosphate synthase subunit pdx2 from Dictyostelium discoideum (Social amoeba).